We begin with the raw amino-acid sequence, 394 residues long: Short-chain dehydrogenase/reductase family 42E member 1 (394 aa).

Tyr153 (proton acceptor) is an active-site residue. Lys157 lines the NAD(+) pocket. 2 helical membrane-spanning segments follow: residues 283–303 (LPLT…FIVG) and 367–387 (FMLW…TWIL).

Belongs to the 3-beta-HSD family.

Its subcellular location is the membrane. The protein is Short-chain dehydrogenase/reductase family 42E member 1 (Sdr42e1) of Mus musculus (Mouse).